The sequence spans 474 residues: E3 ubiquitin-protein ligase CBL-C (474 aa).

Residues 7 to 145 (PWGRQWEEAR…HALFPGGKYC (139 aa)) are 4H. A Cbl-PTB domain is found at 7–321 (PWGRQWEEAR…GKTHNPDLTE (315 aa)). An EF-hand-like region spans residues 146–218 (GHMYQLTKAP…FEFDVFTRLF (73 aa)). Ca(2+) contacts are provided by Asp199, Thr201, and Glu210. Residues 219 to 321 (QPWPTLLKNW…GKTHNPDLTE (103 aa)) form an SH2-like region. Arg264 is a 4-O-phospho-L-tyrosine binding site. The interval 322–350 (LGQAEPQQRIHVSEEQLQLYWAMDSTFEL) is linker. Phosphotyrosine; by SRC is present on Tyr341. An RING-type zinc finger spans residues 351–390 (CKICAESNKDVKIEPCGHLLCSCCLAAWQHSDSQTCPFCR). Residues 351-474 (CKICAESNKD…ALGPQDPAPA (124 aa)) form an interaction with RET region. A disordered region spans residues 409–474 (TAEDSGNSSD…ALGPQDPAPA (66 aa)). Over residues 432–441 (SAPPLPPRPD) the composition is skewed to pro residues.

In terms of assembly, interacts with ubiquitin-conjugating enzyme E2 UBE2D2 and UBE2D3. Isoform 1 interacts with EGFR (tyrosine phosphorylated). Interacts with the SH3 domain proteins LYN and CRK. Interacts (via RING-type zinc finger) with TGFB1I1 (via LIM zinc-binding domain 2); the interaction is direct and enhances the E3 activity. Interacts directly with RET (inactive) and CD2AP; dissociates from RET upon RET activation by GDNF which also increases the interaction with CD2AP suggesting dissociation as CBLC:CD2AP complex. Interacts with SRC; the interaction is enhanced when SRC is phosphorylated at 'Tyr-419'. Phosphorylated on multiple tyrosine residues by SRC. Isoform 1, but not isoform 2, is phosphorylated on tyrosines by EGFR. In terms of processing, autoubiquitinated when phosphorylated at Tyr-341, enhanced by SRC; suggesting proteasomal degradation. Ubiquitous.

It carries out the reaction S-ubiquitinyl-[E2 ubiquitin-conjugating enzyme]-L-cysteine + [acceptor protein]-L-lysine = [E2 ubiquitin-conjugating enzyme]-L-cysteine + N(6)-ubiquitinyl-[acceptor protein]-L-lysine.. Its activity is regulated as follows. Phosphorylation at Tyr-341 is necessary and sufficient for the activation of E3 activity. In terms of biological role, acts as an E3 ubiquitin-protein ligase, which accepts ubiquitin from specific E2 ubiquitin-conjugating enzymes, and then transfers it to substrates promoting their degradation by the proteasome. Functionally coupled with the E2 ubiquitin-protein ligases UB2D1, UB2D2 and UB2D3. Regulator of EGFR mediated signal transduction; upon EGF activation, ubiquitinates EGFR. Isoform 1, but not isoform 2, inhibits EGF stimulated MAPK1 activation. Promotes ubiquitination of SRC phosphorylated at 'Tyr-419'. In collaboration with CD2AP may act as regulatory checkpoint for Ret signaling by modulating the rate of RET degradation after ligand activation; CD2AP converts it from an inhibitor to a promoter of RET degradation; the function limits the potency of GDNF on neuronal survival. In Homo sapiens (Human), this protein is E3 ubiquitin-protein ligase CBL-C (CBLC).